We begin with the raw amino-acid sequence, 30 residues long: 2S seed storage-like protein (30 aa).

The protein belongs to the 2S seed storage albumins family. In terms of assembly, the mature protein is a heterodimer of a small and a large chain linked by 2 disulfide bonds. In terms of tissue distribution, extracted from castor bean.

This is a 2S seed storage protein. Inhibits spore germination in R.solani and F.oxysporum. Exhibits anti-trypsin activity. In Ricinus communis (Castor bean), this protein is 2S seed storage-like protein.